Reading from the N-terminus, the 564-residue chain is H/ACA ribonucleoprotein complex non-core subunit NAF1 (564 aa).

5 disordered regions span residues 1 to 29 (MESEQPAAVKASAPIEEPQSTETAVELGK), 108 to 218 (LVVQ…DSEG), 238 to 264 (DEDDEDFDEDGATGDRSRRRQPPKVRG), 387 to 489 (ASWE…HPSY), and 538 to 564 (PHMYPPPPPFAPPPPNNQSHQGQPPPS). Over residues 146 to 157 (ASGLSLLAAYSS) the composition is skewed to low complexity. Acidic residues predominate over residues 238-249 (DEDDEDFDEDGA). Thr250 carries the post-translational modification Phosphothreonine. Phosphoserine is present on Ser254. Positions 388–402 (SWEHDVEPPARYVDH) are enriched in basic and acidic residues. Ser403 carries the phosphoserine modification. The segment covering 426–446 (STDSVDTVTSVATTATKASSV) has biased composition (low complexity). Position 427 is a phosphothreonine (Thr427). At Ser429 the chain carries Phosphoserine. Thr432 bears the Phosphothreonine mark. Residues 468 to 489 (PSINQHNQNQPQDEQYNFHPSY) show a composition bias toward polar residues. Pro residues predominate over residues 538–553 (PHMYPPPPPFAPPPPN). Over residues 554 to 564 (NQSHQGQPPPS) the composition is skewed to polar residues.

Belongs to the NAF1 family. As to quaternary structure, during assembly of the complex, component of the box H/ACA small nucleolar ribonucleoprotein (H/ACA snoRNP) complex.

It is found in the nucleus. In terms of biological role, RNA-binding protein required for the maturation of the box H/ACA small nucleolar ribonucleoprotein (H/ACA snoRNP) complex and ribosome biogenesis. During assembly of the H/ACA snoRNP complex it associates with the complex and dissociates during complex maturation, becoming replaced by Gar1 to yield mature H/ACA snoRNP complex. This Drosophila melanogaster (Fruit fly) protein is H/ACA ribonucleoprotein complex non-core subunit NAF1.